A 199-amino-acid polypeptide reads, in one-letter code: Protein Thf1 (199 aa).

The stretch at 167–198 (QYSRVEKDISMYKSNIEKMKQALEIIALNLKT) forms a coiled coil.

Belongs to the THF1 family.

Functionally, may be involved in photosynthetic membrane biogenesis. The protein is Protein Thf1 of Prochlorococcus marinus (strain NATL1A).